Reading from the N-terminus, the 246-residue chain is Octanoyltransferase (246 aa).

A BPL/LPL catalytic domain is found at 30–227 (GRIGNTLLLL…QFGRVFGHQV (198 aa)). Substrate is bound by residues 75–82 (RGGDVTYH), 155–157 (AIG), and 168–170 (GFA). Catalysis depends on Cys-186, which acts as the Acyl-thioester intermediate.

Belongs to the LipB family.

The protein localises to the cytoplasm. It catalyses the reaction octanoyl-[ACP] + L-lysyl-[protein] = N(6)-octanoyl-L-lysyl-[protein] + holo-[ACP] + H(+). It functions in the pathway protein modification; protein lipoylation via endogenous pathway; protein N(6)-(lipoyl)lysine from octanoyl-[acyl-carrier-protein]: step 1/2. Catalyzes the transfer of endogenously produced octanoic acid from octanoyl-acyl-carrier-protein onto the lipoyl domains of lipoate-dependent enzymes. Lipoyl-ACP can also act as a substrate although octanoyl-ACP is likely to be the physiological substrate. In Acidobacterium capsulatum (strain ATCC 51196 / DSM 11244 / BCRC 80197 / JCM 7670 / NBRC 15755 / NCIMB 13165 / 161), this protein is Octanoyltransferase.